Here is an 857-residue protein sequence, read N- to C-terminus: Protein STICHEL-like 2 (857 aa).

Position 280 to 287 (280 to 287 (GPRGTGKT)) interacts with ATP. Zn(2+)-binding residues include Cys-299, Cys-309, Cys-312, and Cys-315. Positions 544–576 (LTRHTSEEEMQKLRNALKILSDAEKHLRASKNQ) form a coiled coil. 2 disordered regions span residues 593 to 629 (SSFA…DAEK) and 787 to 845 (ASSR…SSRL). Over residues 599 to 610 (ENGRNQINKDVE) the composition is skewed to basic and acidic residues. Residues 834 to 843 (QSETQNSKSS) show a composition bias toward polar residues.

Belongs to the DnaX/STICHEL family.

In Arabidopsis thaliana (Mouse-ear cress), this protein is Protein STICHEL-like 2.